Reading from the N-terminus, the 158-residue chain is Probable flavodoxin 1 (158 aa).

The region spanning 4–144 (ALITYASMSG…SCRAFARGFL (141 aa)) is the Flavodoxin-like domain.

It belongs to the flavodoxin family. FMN is required as a cofactor.

Its function is as follows. Low-potential electron donor to a number of redox enzymes. This is Probable flavodoxin 1 (ykuN) from Bacillus subtilis (strain 168).